A 596-amino-acid chain; its full sequence is Arginine--tRNA ligase (596 aa).

A 'HIGH' region motif is present at residues 128–138 (ANPTSSLHVGH).

This sequence belongs to the class-I aminoacyl-tRNA synthetase family. As to quaternary structure, monomer.

Its subcellular location is the cytoplasm. The enzyme catalyses tRNA(Arg) + L-arginine + ATP = L-arginyl-tRNA(Arg) + AMP + diphosphate. In Acinetobacter baumannii (strain SDF), this protein is Arginine--tRNA ligase.